The chain runs to 333 residues: 4-hydroxy-2-oxovalerate aldolase (333 aa).

A Pyruvate carboxyltransferase domain is found at 3-253 (ILINDSTLRD…NTGIDLYHFL (251 aa)). 11–12 (RD) is a binding site for substrate. A Mn(2+)-binding site is contributed by D12. H15 acts as the Proton acceptor in catalysis. The substrate site is built by S165 and H192. 2 residues coordinate Mn(2+): H192 and H194.

It belongs to the 4-hydroxy-2-oxovalerate aldolase family. As to quaternary structure, interacts with MhpF.

The enzyme catalyses (S)-4-hydroxy-2-oxopentanoate = acetaldehyde + pyruvate. It functions in the pathway aromatic compound metabolism; 3-phenylpropanoate degradation. Functionally, catalyzes the retro-aldol cleavage of 4-hydroxy-2-oxopentanoate to pyruvate and acetaldehyde. Is involved in the meta-cleavage pathway for the degradation of aromatic compounds. This Serratia proteamaculans (strain 568) protein is 4-hydroxy-2-oxovalerate aldolase.